The chain runs to 947 residues: Protein translocase subunit SecA 1 (947 aa).

ATP contacts are provided by residues Q83, 101 to 105 (GEGKT), and D490. Positions 860–947 (AKAQEQTGQG…KTSKPTRRRG (88 aa)) are disordered. Residues 925 to 934 (TRRERREAAR) are compositionally biased toward basic and acidic residues. Over residues 935-947 (KQAKTSKPTRRRG) the composition is skewed to basic residues.

This sequence belongs to the SecA family. In terms of assembly, monomer and homodimer. Part of the essential Sec protein translocation apparatus which comprises SecA, SecYEG and auxiliary proteins SecDF. Other proteins may also be involved.

Its subcellular location is the cell membrane. It localises to the cytoplasm. The enzyme catalyses ATP + H2O + cellular proteinSide 1 = ADP + phosphate + cellular proteinSide 2.. Its function is as follows. Part of the Sec protein translocase complex. Interacts with the SecYEG preprotein conducting channel. Has a central role in coupling the hydrolysis of ATP to the transfer of proteins into and across the cell membrane, serving as an ATP-driven molecular motor driving the stepwise translocation of polypeptide chains across the membrane. The sequence is that of Protein translocase subunit SecA 1 from Mycobacterium sp. (strain KMS).